The primary structure comprises 77 residues: Small ribosomal subunit protein bS18 (77 aa).

It belongs to the bacterial ribosomal protein bS18 family. As to quaternary structure, part of the 30S ribosomal subunit. Forms a tight heterodimer with protein bS6.

Functionally, binds as a heterodimer with protein bS6 to the central domain of the 16S rRNA, where it helps stabilize the platform of the 30S subunit. In Desulforamulus reducens (strain ATCC BAA-1160 / DSM 100696 / MI-1) (Desulfotomaculum reducens), this protein is Small ribosomal subunit protein bS18.